Reading from the N-terminus, the 320-residue chain is Malate dehydrogenase (320 aa).

Residues 10–15 (GAGQIG) and D34 each bind NAD(+). Substrate is bound by residues R83 and R89. NAD(+) is bound by residues N96 and 119–121 (ITN). 2 residues coordinate substrate: N121 and R152. H176 (proton acceptor) is an active-site residue.

This sequence belongs to the LDH/MDH superfamily. MDH type 3 family.

The catalysed reaction is (S)-malate + NAD(+) = oxaloacetate + NADH + H(+). In terms of biological role, catalyzes the reversible oxidation of malate to oxaloacetate. The protein is Malate dehydrogenase of Cereibacter sphaeroides (strain ATCC 17029 / ATH 2.4.9) (Rhodobacter sphaeroides).